The sequence spans 707 residues: Polyribonucleotide nucleotidyltransferase (707 aa).

2 residues coordinate Mg(2+): aspartate 487 and aspartate 493. In terms of domain architecture, KH spans 554 to 613; sequence PSMATIKIDPDKIRDVIGKGGATIRKICDDTGASIDLDDDGTVRIYAEDKTAAKAAIDTV. The region spanning 623 to 691 is the S1 motif domain; sequence GKLYRGTVAR…NRNRVKLSIK (69 aa).

The protein belongs to the polyribonucleotide nucleotidyltransferase family. Component of the RNA degradosome, which is a multiprotein complex involved in RNA processing and mRNA degradation. Mg(2+) is required as a cofactor.

The protein resides in the cytoplasm. The catalysed reaction is RNA(n+1) + phosphate = RNA(n) + a ribonucleoside 5'-diphosphate. Involved in mRNA degradation. Catalyzes the phosphorolysis of single-stranded polyribonucleotides processively in the 3'- to 5'-direction. The polypeptide is Polyribonucleotide nucleotidyltransferase (Chromohalobacter salexigens (strain ATCC BAA-138 / DSM 3043 / CIP 106854 / NCIMB 13768 / 1H11)).